A 528-amino-acid polypeptide reads, in one-letter code: Protein spinster homolog 1 (528 aa).

The disordered stretch occupies residues 1–44 (MSGSDTAPFLSQADDTDDGPAPGTPGLPGSMGNPKSEDPAVPDQ). 12 helical membrane-spanning segments follow: residues 50–70 (ITGL…YINL), 98–118 (GLIQ…FGYL), 126–146 (YLMC…SFIP), 160–180 (VGVG…DLFV), 187–207 (MLSV…IAGS), 218–238 (WALR…FLVV), 278–298 (LGFT…PAFL), 323–343 (LIFG…GVEI), 357–377 (LVCA…LACA), 381–401 (IVAT…NWAI), 421–441 (FQIV…IGSI), and 465–485 (MLCA…AIFI). A Phosphoserine modification is found at S518.

The protein belongs to the major facilitator superfamily. Spinster (TC 2.A.1.49) family. Interacts with BCL2 and BCL2L1.

It is found in the lysosome membrane. It carries out the reaction a 1-acyl-sn-glycero-3-phosphocholine(out) + H(+)(out) = a 1-acyl-sn-glycero-3-phosphocholine(in) + H(+)(in). The catalysed reaction is 1-hexadecanoyl-sn-glycero-3-phosphocholine(out) + H(+)(out) = 1-hexadecanoyl-sn-glycero-3-phosphocholine(in) + H(+)(in). The enzyme catalyses 1-(9Z-octadecenoyl)-sn-glycero-3-phosphocholine(out) + H(+)(out) = 1-(9Z-octadecenoyl)-sn-glycero-3-phosphocholine(in) + H(+)(in). It catalyses the reaction 1-(5Z,8Z,11Z,14Z-eicosatetraenoyl)-sn-glycero-3-phosphocholine(out) + H(+)(out) = 1-(5Z,8Z,11Z,14Z-eicosatetraenoyl)-sn-glycero-3-phosphocholine(in) + H(+)(in). It carries out the reaction 1-(4Z,7Z,10Z,13Z,16Z,19Z-docosahexaenoyl)-sn-glycero-3-phosphocholine(out) + H(+)(out) = 1-(4Z,7Z,10Z,13Z,16Z,19Z-docosahexaenoyl)-sn-glycero-3-phosphocholine(in) + H(+)(in). The catalysed reaction is a 1-acyl-sn-glycero-3-phosphoethanolamine(out) + H(+)(out) = a 1-acyl-sn-glycero-3-phosphoethanolamine(in) + H(+)(in). The enzyme catalyses 1-(9Z-octadecenoyl)-sn-glycero-3-phosphoethanolamine(out) + H(+)(out) = 1-(9Z-octadecenoyl)-sn-glycero-3-phosphoethanolamine(in) + H(+)(in). It catalyses the reaction 1-acyl-sn-glycero-3-phospho-(1'-sn-glycerol)(out) + H(+)(out) = 1-acyl-sn-glycero-3-phospho-(1'-sn-glycerol)(in) + H(+)(in). It carries out the reaction 1-(9Z-octadecenoyl)-sn-glycero-3-phospho-(1'-sn-glycerol)(out) + H(+)(out) = 1-(9Z-octadecenoyl)-sn-glycero-3-phospho-(1'-sn-glycerol)(in) + H(+)(in). The catalysed reaction is a 1-O-(1Z-alkenyl)-sn-glycero-3-phosphocholine(out) + H(+)(out) = a 1-O-(1Z-alkenyl)-sn-glycero-3-phosphocholine(in) + H(+)(in). The enzyme catalyses 1-(1Z-hexadecenyl)-sn-glycero-3-phosphocholine(out) + H(+)(out) = 1-(1Z-hexadecenyl)-sn-glycero-3-phosphocholine(in) + H(+)(in). It catalyses the reaction a 1-O-(1Z-alkenyl)-sn-glycero-3-phosphoethanolamine(out) + H(+)(out) = a 1-O-(1Z-alkenyl)-sn-glycero-3-phosphoethanolamine(in) + H(+)(in). It carries out the reaction 1-O-(1Z-hexadecenyl)-sn-glycero-3-phosphoethanolamine(out) + H(+)(out) = 1-O-(1Z-hexadecenyl)-sn-glycero-3-phosphoethanolamine(in) + H(+)(in). Plays a critical role in the phospholipid salvage pathway from lysosomes to the cytosol. Mediates the rate-limiting, proton-dependent, lysosomal efflux of lysophospholipids, which can then be reacylated by acyltransferases in the endoplasmic reticulum to form phospholipids. Selective for zwitterionic headgroups such as lysophosphatidylcholine (LPC) and lysophosphatidylethanolamine (LPE), can also transport lysophosphatidylglycerol (LPG), but not other anionic lysophospholipids, sphingosine, nor sphingomyelin. Transports lysophospholipids with saturated, monounsaturated, and polyunsaturated fatty acids, such as 1-hexadecanoyl-sn-glycero-3-phosphocholine, 1-(9Z-octadecenoyl)-sn-glycero-3-phosphocholine and 1-(4Z,7Z,10Z,13Z,16Z,19Z-docosahexaenoyl)-sn-glycero-3-phosphocholine, respectively. Can also transport lysoplasmalogen (LPC with a fatty alcohol) such as 1-(1Z-hexadecenyl)-sn-glycero-3-phosphocholine. Essential player in lysosomal homeostasis. Crucial for cell survival under conditions of nutrient limitation. May be involved in necrotic or autophagic cell death. The protein is Protein spinster homolog 1 (SPNS1) of Bos taurus (Bovine).